Reading from the N-terminus, the 431-residue chain is MTNVVVIGSQWGDEGKGKIVDWLSERADVIVRFQGGHNAGHTLVVDGVSYKLALLPSGLVRGKLSVIGNGVVVDPHHFVAEVEKLRAQGIAVTPDVLRIAENAPLILSLHRDLDALREDAASNSGTKIGTTRRGIGPAYEDKVGRRAIRVIDLSEPETLPAKIDRLLTHHNALRRGMGLSEISFNALHEELTSVAEHILPYMDQVWRLLDEQRKAGARILFEGAQGALLDNDHGTYPFVTSSNTVAGQAAAGSGLGPTALGYVLGITKAYTTRVGEGPFPCELHDEIGKHLSTVGREVGVNTGRPRRCGWFDAVLVRQTVKTSGITGIALTKLDVLDGLDELKICIGYRLDGKEIDYLPSSQAAQARVEPIYITLEGWKESTVGARKWADLPAQAIKYVRQVEELIGAPVAMLSTSPEREDTILVTDPFEG.

GTP-binding positions include 12–18 (GDEGKGK) and 40–42 (GHT). D13 acts as the Proton acceptor in catalysis. 2 residues coordinate Mg(2+): D13 and G40. Residues 13–16 (DEGK), 38–41 (NAGH), T131, R145, Q225, T240, and R304 contribute to the IMP site. Residue H41 is the Proton donor of the active site. Residue 300-306 (VNTGRPR) coordinates substrate. GTP-binding positions include R306, 332 to 334 (KLD), and 414 to 416 (STS).

Belongs to the adenylosuccinate synthetase family. As to quaternary structure, homodimer. Mg(2+) is required as a cofactor.

Its subcellular location is the cytoplasm. It catalyses the reaction IMP + L-aspartate + GTP = N(6)-(1,2-dicarboxyethyl)-AMP + GDP + phosphate + 2 H(+). The protein operates within purine metabolism; AMP biosynthesis via de novo pathway; AMP from IMP: step 1/2. Plays an important role in the de novo pathway of purine nucleotide biosynthesis. Catalyzes the first committed step in the biosynthesis of AMP from IMP. The chain is Adenylosuccinate synthetase from Rhizobium rhizogenes (strain K84 / ATCC BAA-868) (Agrobacterium radiobacter).